A 1738-amino-acid polypeptide reads, in one-letter code: MGQTATTPLSLTLDHWKDVERTAHNQSVEVRKRRWVTFCSAEWPTFNVGWPRDGTFNPDIITQVKIKVFSPGPHGHPDQVPYIVTWEALAVDPPPWVKPFVHPKPPLLLPPSAPSLPPEPPLSTPPQSSLYPALTSPLNTKPRPQVLPDSGGPLIDLLTEDPPPYRDPGPPSPDGKGDSGEVAPTEGAPDSSPMVSRLRGRREPPVADSTTSQAFPLRLGGNGQFQYWPFSSSDLYNWKNNNPSFSEDPGKLTALIESVLLTHQPTWDDCQQLLGTLLTGEEKQRVLLEARKAVRGEDGRPTQLPNDINDAFPLERPDWDYNTQRGRNHLVHYRQLLLAGLQNAGRSPTNLAKVKGITQGPNESPSAFLERLKEAYRRYTPYDPEDPGQETNVSMSFIWQSAPDIGRKLERLEDLKNKTLGDLVREAEKIFNKRETPEEREERVRRETEEKEERRRAEDERREKERDRRRHREMSKLLATVVSGQRQDRQGGERRRPQLDHDQCAYCKEKGHWARDCPKKPRGPRGPRPQASLLTLDDQGGQGQEPPPEPRITLKVGGQPVTFLVDTGAQHSVLTQNPGPLSDKSAWVQGATGGKRYRWTTDRRVHLATGKVTHSFLHVPDCPYPLLGRDLLTKLKAQIHFEGSGAQVVGPMGQPLQVLTLNIEDEYRLHETSKGPDVPLGSTWLSDFPQAWAETGGMGLAVRQAPLIIPLRAASTPVSIKQYPMSREARLGIKPHIQRLLDQGILVPCQSPWNTPLLPVKKPGTNDYRPVQDLREVNKRVEDIHPTVPNPYNLLSGLPPSHQWYTVLDLKDAFFCLRLHPTSQSLFAFEWRDPEMGISGQLTWTRLPQGFKNSPTLFDEALHRDLADFRIQHPDLILLQYVDDLLLAATSELDCQQGTRALLQTLGDLGYRASAKKAQICQKQVKYLGYLLKEGQRWLTEARKETVMGQPTPKTPRQLREFLGTAGFCRLWIPGFAEMAAPLYPLTKTGTLFKWGPDQQKAYQEIKQALLTAPALGLPDLTKPFELFVDEKQGYAKGVLTQKLGPWRRPVAYLSKKLDPVAAGWPPCLRMVAAIAVLTKDAGKLTMGQPLVILAPHAVEALVKQPPDRWLSNARMTHYQALLLDTDRVQFGPIVTLNPATLLPLPEEGLQHDCLDILAEAHGTRPDLTDQPLPDADHTWYTDGSSFLQEGQRKAGAAVTTETEVIWAKALPAGTSAQRAELIALTQALKMAEGKKLNVYTDSRYAFATAHIHGEIYRRRGLLTSEGKEIKNKEEILALLKALFLPKRLSIIHCPGHQKGNRAEARGNRMADQAAREVATRETPETSTLLIENSAPYTREHFHYTVTDIKDLTKLGATYDNAQKCWVYQGKPVMPDQFTFELLDFLHQLTHLSFSKTKALLERSYSPYYMLNRDRTLKDITETCKACAQVNASKSAVKQGTRVRGHRPGTHWEIDFTEVKPGLYGYKYLLVFVDTFSGWVEAFPTKKETAKVVTKKLLEEIFPRFGMPQVLGTDNGPAFVSKVSQTVADLLGVDWKLHCAYRPQSSGQVERMNRTIKETLTKLTLATGSRDWVLLLPLALYRARNTPGPHGLTPYEILYGAPPPLVNFPDPDMAKVTHNPSLQAHLQALYLVQHEVWRPLAAAYQEQLDRPVVPHPFRVGDTVWVRRHQTKNLEPRWKGPYTVLLTTPTALKVDGIAAWIHAAHVKAADTKIEPPSESTWRVQRSQNPLKIRLTRGTS.

The N-myristoyl glycine; by host moiety is linked to residue G2. The PTAP/PSAP motif signature appears at 111–114 (PSAP). Positions 111 to 124 (PSAPSLPPEPPLST) are enriched in pro residues. A disordered region spans residues 111 to 218 (PSAPSLPPEP…STTSQAFPLR (108 aa)). The short motif at 130-134 (LYPAL) is the LYPX(n)L motif element. The segment covering 161-173 (DPPPYRDPGPPSP) has biased composition (pro residues). The short motif at 162 to 165 (PPPY) is the PPXY motif element. Phosphoserine; by host is present on S192. The interval 345–393 (GRSPTNLAKVKGITQGPNESPSAFLERLKEAYRRYTPYDPEDPGQETNV) is interaction with host PIAS4. The interaction with host UBE2I stretch occupies residues 430-435 (IFNKRE). Basic and acidic residues-rich tracts occupy residues 434–466 (RETP…EKER) and 486–499 (RQDR…RPQL). 2 disordered regions span residues 434-499 (RETP…RPQL) and 513-552 (WARD…EPRI). A coiled-coil region spans residues 438–478 (EEREERVRRETEEKEERRRAEDERREKERDRRRHREMSKLL). A CCHC-type zinc finger spans residues 502–519 (DQCAYCKEKGHWARDCPK). Residues 561-631 (VTFLVDTGAQ…CPYPLLGRDL (71 aa)) enclose the Peptidase A2 domain. The active-site Protease; shared with dimeric partner is the D566. The Reverse transcriptase domain occupies 741–932 (LDQGILVPCQ…KQVKYLGYLL (192 aa)). 7 residues coordinate Mg(2+): D809, D883, D884, D1183, E1221, D1242, and D1312. The 147-residue stretch at 1174 to 1320 (PDADHTWYTD…ADQAAREVAT (147 aa)) folds into the RNase H type-1 domain. An HHCC-type zinc finger spans residues 1387 to 1427 (HQLTHLSFSKTKALLERSYSPYYMLNRDRTLKDITETCKAC). The Integrase catalytic domain maps to 1444 to 1602 (RGHRPGTHWE…TPYEILYGAP (159 aa)). Residues D1455 and D1514 each contribute to the Mg(2+) site.

This sequence belongs to the retroviral Pol polyprotein family. Homohexamer; further associates as homomultimer. The virus core is composed of a lattice formed from hexagonal rings, each containing six capsid monomers. Interacts with mouse UBE2I and mouse PIAS4. In terms of assembly, interacts (via PPXY motif) with host NEDD4. Interacts (via PSAP motif) with host TSG101. Interacts (via LYPX(n)L motif) with host PDCD6IP. As to quaternary structure, the reverse transcriptase is a monomer (Potential). Interacts (via RNase domains) with host release factor ETF1; this interaction is essential for translational readthrough of amber codon between viral gag and pol genes, as well as for viral replication. Homodimer. It depends on Mg(2+) as a cofactor. Post-translationally, ubiquitinated by ITCH. Gag can recruit the ubiquitin ligase Itch in an L domain-independent manner to facilitate virus release via a mechanism that involves Gag ubiquitination. In terms of processing, specific enzymatic cleavages by the viral protease yield mature proteins. The protease is released by autocatalytic cleavage. The polyprotein is cleaved during and after budding, this process is termed maturation. Sumoylated; which is required for virus replication. Post-translationally, phosphorylated on serine residues.

Its subcellular location is the virion. The protein localises to the host cell membrane. The protein resides in the host late endosome membrane. It is found in the host endosome. It localises to the host multivesicular body. Its subcellular location is the host cytoplasm. It catalyses the reaction DNA(n) + a 2'-deoxyribonucleoside 5'-triphosphate = DNA(n+1) + diphosphate. The catalysed reaction is Endonucleolytic cleavage to 5'-phosphomonoester.. With respect to regulation, most efficiently inhibited by Amprenavir, which is able to block Gag-Pol processing in infected cells. Plays a role in budding and is processed by the viral protease during virion maturation outside the cell. During budding, it recruits, in a PPXY-dependent or independent manner, Nedd4-like ubiquitin ligases that conjugate ubiquitin molecules to Gag-Pol, or to Gag-Pol binding host factors. Interaction with HECT ubiquitin ligases probably links the viral protein to the host ESCRT pathway and facilitates release. In terms of biological role, targets Gag and gag-pol polyproteins to the plasma membrane via a multipartite membrane binding signal, that includes its myristoylated N-terminus. Also mediates nuclear localization of the pre-integration complex. Its function is as follows. Constituent of the pre-integration complex (PIC) which tethers the latter to mitotic chromosomes. This allows the integration of the viral genome into the host DNA. Functionally, forms the spherical core of the virion that encapsulates the genomic RNA-nucleocapsid complex. Involved in the packaging and encapsidation of two copies of the genome. Binds with high affinity to conserved UCUG elements within the packaging signal, located near the 5'-end of the genome. This binding is dependent on genome dimerization. Acts as a nucleic acid chaperone which is involved in rearrangement of nucleic acid secondary structures during gRNA retrotranscription. In terms of biological role, the aspartyl protease mediates proteolytic cleavages of Gag and Gag-Pol polyproteins during or shortly after the release of the virion from the plasma membrane. Cleavages take place as an ordered, step-wise cascade to yield mature proteins. This process is called maturation. Displays maximal activity during the budding process just prior to particle release from the cell (Potential). Cleaves the translation initiation factor eIF4G leading to the inhibition of host cap-dependent translation. Its function is as follows. RT is a multifunctional enzyme that converts the viral dimeric RNA genome into dsDNA in the cytoplasm, shortly after virus entry into the cell. This enzyme displays a DNA polymerase activity that can copy either DNA or RNA templates, and a ribonuclease H (RNase H) activity that cleaves the RNA strand of RNA-DNA heteroduplexes in a partially processive 3' to 5' endonucleasic mode. Conversion of viral genomic RNA into dsDNA requires many steps. A tRNA binds to the primer-binding site (PBS) situated at the 5' end of the viral RNA. RT uses the 3' end of the tRNA primer to perform a short round of RNA-dependent minus-strand DNA synthesis. The reading proceeds through the U5 region and ends after the repeated (R) region which is present at both ends of viral RNA. The portion of the RNA-DNA heteroduplex is digested by the RNase H, resulting in a ssDNA product attached to the tRNA primer. This ssDNA/tRNA hybridizes with the identical R region situated at the 3' end of viral RNA. This template exchange, known as minus-strand DNA strong stop transfer, can be either intra- or intermolecular. RT uses the 3' end of this newly synthesized short ssDNA to perform the RNA-dependent minus-strand DNA synthesis of the whole template. RNase H digests the RNA template except for a polypurine tract (PPT) situated at the 5' end of the genome. It is not clear if both polymerase and RNase H activities are simultaneous. RNase H probably can proceed both in a polymerase-dependent (RNA cut into small fragments by the same RT performing DNA synthesis) and a polymerase-independent mode (cleavage of remaining RNA fragments by free RTs). Secondly, RT performs DNA-directed plus-strand DNA synthesis using the PPT that has not been removed by RNase H as primers. PPT and tRNA primers are then removed by RNase H. The 3' and 5' ssDNA PBS regions hybridize to form a circular dsDNA intermediate. Strand displacement synthesis by RT to the PBS and PPT ends produces a blunt ended, linear dsDNA copy of the viral genome that includes long terminal repeats (LTRs) at both ends. Functionally, catalyzes viral DNA integration into the host chromosome, by performing a series of DNA cutting and joining reactions. This enzyme activity takes place after virion entry into a cell and reverse transcription of the RNA genome in dsDNA. The first step in the integration process is 3' processing. This step requires a complex comprising the viral genome, matrix protein and integrase. This complex is called the pre-integration complex (PIC). The integrase protein removes 2 nucleotides from each 3' end of the viral DNA, leaving recessed CA OH's at the 3' ends. In the second step that requires cell division, the PIC enters cell nucleus. In the third step, termed strand transfer, the integrase protein joins the previously processed 3' ends to the 5' ends of strands of target cellular DNA at the site of integration. The last step is viral DNA integration into host chromosome. The sequence is that of Gag-Pol polyprotein (pol) from Friend murine leukemia virus (isolate PVC-211) (FrMLV).